Consider the following 427-residue polypeptide: Serine--tRNA ligase (427 aa).

An L-serine-binding site is contributed by Thr-231–Glu-233. Arg-262 to Glu-264 provides a ligand contact to ATP. Glu-285 contacts L-serine. Glu-349 to Ser-352 contacts ATP. Ser-385 contacts L-serine.

Belongs to the class-II aminoacyl-tRNA synthetase family. Type-1 seryl-tRNA synthetase subfamily. Homodimer. The tRNA molecule binds across the dimer.

The protein localises to the cytoplasm. It carries out the reaction tRNA(Ser) + L-serine + ATP = L-seryl-tRNA(Ser) + AMP + diphosphate + H(+). The catalysed reaction is tRNA(Sec) + L-serine + ATP = L-seryl-tRNA(Sec) + AMP + diphosphate + H(+). It functions in the pathway aminoacyl-tRNA biosynthesis; selenocysteinyl-tRNA(Sec) biosynthesis; L-seryl-tRNA(Sec) from L-serine and tRNA(Sec): step 1/1. In terms of biological role, catalyzes the attachment of serine to tRNA(Ser). Is also able to aminoacylate tRNA(Sec) with serine, to form the misacylated tRNA L-seryl-tRNA(Sec), which will be further converted into selenocysteinyl-tRNA(Sec). The protein is Serine--tRNA ligase of Listeria welshimeri serovar 6b (strain ATCC 35897 / DSM 20650 / CCUG 15529 / CIP 8149 / NCTC 11857 / SLCC 5334 / V8).